The sequence spans 155 residues: MDLLRQYNFKIADASPEYLERRKKQAVLFMTAAAVTIFTSRFAYKSTITRQYIPTLFQGNHSPPLGYNFTSDAAVAVGTGTMLCASVSSMICFGTCWVLDVSTFREFGWKMKSLMGGTQKEQELADMPMDEDSAYIQDGLNDILDGKVELNFDDE.

A run of 2 helical transmembrane segments spans residues 27 to 44 and 77 to 99; these read VLFMTAAAVTIFTSRFAY and VGTGTMLCASVSSMICFGTCWVL.

Belongs to the AIM11 family.

The protein localises to the membrane. This Clavispora lusitaniae (strain ATCC 42720) (Yeast) protein is Altered inheritance of mitochondria protein 11 (AIM11).